A 188-amino-acid chain; its full sequence is dCTP deaminase (188 aa).

Residues Lys111–Arg116, Thr135–Glu137, Gln156, Tyr170, Lys179, and Gln180 contribute to the dCTP site. The active-site Proton donor/acceptor is the Glu137.

Belongs to the dCTP deaminase family. As to quaternary structure, homotrimer.

The catalysed reaction is dCTP + H2O + H(+) = dUTP + NH4(+). It participates in pyrimidine metabolism; dUMP biosynthesis; dUMP from dCTP (dUTP route): step 1/2. Functionally, catalyzes the deamination of dCTP to dUTP. In Orientia tsutsugamushi (strain Ikeda) (Rickettsia tsutsugamushi), this protein is dCTP deaminase.